The sequence spans 323 residues: Olfactory receptor 2T35 (323 aa).

At 1-26 (MGMEGLLQNSTNFVLTGLITHPAFPG) the chain is on the extracellular side. Asn-9 carries an N-linked (GlcNAc...) asparagine glycan. The helical transmembrane segment at 27–50 (LLFAVVFSIFVVAITANLVMILLI) threads the bilayer. Residues 51–58 (HMDSRLHT) lie on the Cytoplasmic side of the membrane. A helical transmembrane segment spans residues 59–80 (PMYFLLSQLSIMDTIYICITVP). The Extracellular portion of the chain corresponds to 81 to 101 (KMLQDLLSKDKTISFLGCAVQ). An intrachain disulfide couples Cys-98 to Cys-189. A helical membrane pass occupies residues 102–120 (IFYLTLIGGEFFLLGLMAY). At 121 to 139 (DRYVAVCNPLRYPLLMNRR) the chain is on the cytoplasmic side. The helical transmembrane segment at 140-158 (VCLFMVVGSWVGGSLDGFM) threads the bilayer. Topologically, residues 159-195 (LTPVTMSFPFCRSREINHFFCEIPAVLKLSCTDTSLY) are extracellular. A helical transmembrane segment spans residues 196–219 (ETLMYACCVLMLLIPLSVISVSYT). The Cytoplasmic portion of the chain corresponds to 220-236 (HILLTVHRMNSAEGRRK). A helical membrane pass occupies residues 237 to 259 (AFATCSSHIMVVSVFYGAAFYTN). Topologically, residues 260 to 272 (VLPHSYHTPEKDK) are extracellular. A helical transmembrane segment spans residues 273–292 (VVSAFYTILTPMLNPLIYSL). Residues 293 to 323 (RNKDVAAALRKVLGRCGSSQSIRVATVIRKG) are Cytoplasmic-facing.

This sequence belongs to the G-protein coupled receptor 1 family.

The protein localises to the cell membrane. Odorant receptor. The polypeptide is Olfactory receptor 2T35 (OR2T35) (Homo sapiens (Human)).